The following is a 360-amino-acid chain: UDP-3-O-acylglucosamine N-acyltransferase (360 aa).

The active-site Proton acceptor is the H253.

The protein belongs to the transferase hexapeptide repeat family. LpxD subfamily. In terms of assembly, homotrimer.

The enzyme catalyses a UDP-3-O-[(3R)-3-hydroxyacyl]-alpha-D-glucosamine + a (3R)-hydroxyacyl-[ACP] = a UDP-2-N,3-O-bis[(3R)-3-hydroxyacyl]-alpha-D-glucosamine + holo-[ACP] + H(+). It functions in the pathway bacterial outer membrane biogenesis; LPS lipid A biosynthesis. Catalyzes the N-acylation of UDP-3-O-acylglucosamine using 3-hydroxyacyl-ACP as the acyl donor. Is involved in the biosynthesis of lipid A, a phosphorylated glycolipid that anchors the lipopolysaccharide to the outer membrane of the cell. This Burkholderia multivorans (strain ATCC 17616 / 249) protein is UDP-3-O-acylglucosamine N-acyltransferase.